The primary structure comprises 292 residues: ATP synthase gamma chain (292 aa).

The protein belongs to the ATPase gamma chain family. F-type ATPases have 2 components, CF(1) - the catalytic core - and CF(0) - the membrane proton channel. CF(1) has five subunits: alpha(3), beta(3), gamma(1), delta(1), epsilon(1). CF(0) has three main subunits: a, b and c.

It is found in the cell inner membrane. In terms of biological role, produces ATP from ADP in the presence of a proton gradient across the membrane. The gamma chain is believed to be important in regulating ATPase activity and the flow of protons through the CF(0) complex. The polypeptide is ATP synthase gamma chain (Methylobacterium nodulans (strain LMG 21967 / CNCM I-2342 / ORS 2060)).